The following is a 344-amino-acid chain: Arginine N-succinyltransferase (344 aa).

L125 is a succinyl-CoA binding site. Residue H229 is the Proton donor of the active site.

The protein belongs to the arginine N-succinyltransferase family.

It carries out the reaction succinyl-CoA + L-arginine = N(2)-succinyl-L-arginine + CoA + H(+). Its pathway is amino-acid degradation; L-arginine degradation via AST pathway; L-glutamate and succinate from L-arginine: step 1/5. Functionally, catalyzes the transfer of succinyl-CoA to arginine to produce N(2)-succinylarginine. The chain is Arginine N-succinyltransferase from Salmonella typhi.